Reading from the N-terminus, the 498-residue chain is uncharacterized protein (498 aa).

Residues 1–26 (MEESSMAQASLICLLLSFSIIMLSNA) form the signal peptide. Topologically, residues 27-441 (ADISIDCGSS…GEEKSSSNLA (415 aa)) are extracellular. Residues Asn-44, Asn-150, Asn-354, and Asn-357 are each glycosylated (N-linked (GlcNAc...) asparagine). The segment at 351-439 (GSGNGTNSTS…KSGEEKSSSN (89 aa)) is disordered. Positions 362–414 (SGGGSPSPGGGSGSPPSTGGGSGSPPSTGGGGGSPSKGGGGGKSGGSNNGDGG) are enriched in gly residues. Basic and acidic residues predominate over residues 418–436 (ASEDEKSADSSGKSGEEKS). Residues 442–462 (LPLGISLPTLLSLGAGGWGVW) form a helical membrane-spanning segment. Residues 463-498 (KYFIKPRRHPESELPLKQNISLQVNMGNATVVNAGQ) are Cytoplasmic-facing.

It is found in the membrane. This is an uncharacterized protein from Arabidopsis thaliana (Mouse-ear cress).